The following is a 200-amino-acid chain: MELMVKGADALTVSETTFGRDFNEALVHQVVVAYAAGARQGTRAQKTRSEVSGGGAKPWRQKGTGRARAGTIRSPIWRTGGVTFAAKPQDHSQKVNKKMYRGAMKSILSELIRQERLIVVDNFSVEAPKTKELVAKLKELELNDVLIVTGEVDENLFLAARNLYKVDARDVAGVDPVSLIAFDKVLMTADAVKQVEEMLA.

The disordered stretch occupies residues 42-65 (TRAQKTRSEVSGGGAKPWRQKGTG).

Belongs to the universal ribosomal protein uL4 family. As to quaternary structure, part of the 50S ribosomal subunit.

Functionally, one of the primary rRNA binding proteins, this protein initially binds near the 5'-end of the 23S rRNA. It is important during the early stages of 50S assembly. It makes multiple contacts with different domains of the 23S rRNA in the assembled 50S subunit and ribosome. Its function is as follows. Forms part of the polypeptide exit tunnel. This chain is Large ribosomal subunit protein uL4, found in Vibrio atlanticus (strain LGP32) (Vibrio splendidus (strain Mel32)).